A 128-amino-acid polypeptide reads, in one-letter code: Large ribosomal subunit protein bL12 (128 aa).

The protein belongs to the bacterial ribosomal protein bL12 family. In terms of assembly, homodimer. Part of the ribosomal stalk of the 50S ribosomal subunit. Forms a multimeric L10(L12)X complex, where L10 forms an elongated spine to which 2 to 4 L12 dimers bind in a sequential fashion. Binds GTP-bound translation factors.

Its function is as follows. Forms part of the ribosomal stalk which helps the ribosome interact with GTP-bound translation factors. Is thus essential for accurate translation. In Synechococcus sp. (strain ATCC 27144 / PCC 6301 / SAUG 1402/1) (Anacystis nidulans), this protein is Large ribosomal subunit protein bL12.